Reading from the N-terminus, the 804-residue chain is Elongation factor G, mitochondrial (804 aa).

Residues M1–R63 constitute a mitochondrion transit peptide. In terms of domain architecture, tr-type G spans R99 to A385. GTP contacts are provided by residues A108–T115, D183–H187, and N237–D240.

It belongs to the TRAFAC class translation factor GTPase superfamily. Classic translation factor GTPase family. EF-G/EF-2 subfamily.

The protein localises to the mitochondrion. The protein operates within protein biosynthesis; polypeptide chain elongation. Its function is as follows. Mitochondrial GTPase that catalyzes the GTP-dependent ribosomal translocation step during translation elongation. During this step, the ribosome changes from the pre-translocational (PRE) to the post-translocational (POST) state as the newly formed A-site-bound peptidyl-tRNA and P-site-bound deacylated tRNA move to the P and E sites, respectively. Catalyzes the coordinated movement of the two tRNA molecules, the mRNA and conformational changes in the ribosome. This Botryotinia fuckeliana (strain B05.10) (Noble rot fungus) protein is Elongation factor G, mitochondrial (mef1).